A 421-amino-acid polypeptide reads, in one-letter code: Alpha-tubulin N-acetyltransferase 1 (421 aa).

In terms of domain architecture, N-acetyltransferase spans 1 to 190 (MEFPFDVDAL…NNFVIFEGFF (190 aa)). Residue K56 is modified to N6-acetyllysine; by autocatalysis. 124-137 (FYIHESVQRHGHGR) contacts acetyl-CoA. K146 carries the N6-acetyllysine; by autocatalysis modification. Residue 160 to 169 (SPKLLKFLNK) coordinates acetyl-CoA. Positions 214–235 (PIPAAPARKLPPKRAEGDIKPY) are disordered. Residues 226–235 (KRAEGDIKPY) are compositionally biased toward basic and acidic residues. N6-acetyllysine; by autocatalysis occurs at positions 233 and 244. Positions 252–284 (PLNRAPRRATPPAHPPPRSSSLGNSPDRGPLRP) are disordered. Phosphoserine occurs at positions 272 and 276. At R305 the chain carries Asymmetric dimethylarginine. Position 315 is a phosphoserine (S315). R323 is subject to Omega-N-methylarginine. A compositionally biased stretch (polar residues) spans 342 to 351 (FNTSFLGTGN). A disordered region spans residues 342-398 (FNTSFLGTGNQERKQGEQEAEDRSASEDQVLLQDGSGEEPTHTVAPRAQAPPAQSWM). Over residues 352-367 (QERKQGEQEAEDRSAS) the composition is skewed to basic and acidic residues.

The protein belongs to the acetyltransferase ATAT1 family. As to quaternary structure, component of the BBSome complex. Interacts with AP2 alpha-adaptins, including AP2A2, but not with AP1 gamma-adaptin (AP1G1/AP1G2); this interaction is required for efficient alpha-tubulin acetylation, hence clathrin-coated pits are sites of microtubule acetylation. Post-translationally, autoacetylation strongly increases tubulin acetylation.

Its subcellular location is the cytoplasm. It is found in the membrane. The protein resides in the clathrin-coated pit. It localises to the cell junction. The protein localises to the focal adhesion. Its subcellular location is the cell projection. It is found in the axon. The protein resides in the cytoskeleton. It localises to the spindle. It carries out the reaction L-lysyl-[alpha-tubulin] + acetyl-CoA = N(6)-acetyl-L-lysyl-[alpha-tubulin] + CoA + H(+). Functionally, specifically acetylates 'Lys-40' in alpha-tubulin on the lumenal side of microtubules. Promotes microtubule destabilization and accelerates microtubule dynamics; this activity may be independent of acetylation activity. Acetylates alpha-tubulin with a slow enzymatic rate, due to a catalytic site that is not optimized for acetyl transfer. Enters the microtubule through each end and diffuses quickly throughout the lumen of microtubules. Acetylates only long/old microtubules because of its slow acetylation rate since it does not have time to act on dynamically unstable microtubules before the enzyme is released. Required for normal sperm flagellar function. Promotes directional cell locomotion and chemotaxis, through AP2A2-dependent acetylation of alpha-tubulin at clathrin-coated pits that are concentrated at the leading edge of migrating cells. May facilitate primary cilium assembly. The chain is Alpha-tubulin N-acetyltransferase 1 from Rattus norvegicus (Rat).